The primary structure comprises 347 residues: L-threonine 3-dehydrogenase (347 aa).

Cysteine 42 contributes to the Zn(2+) binding site. Catalysis depends on charge relay system residues threonine 44 and histidine 47. Zn(2+)-binding residues include histidine 67, glutamate 68, cysteine 97, cysteine 100, cysteine 103, and cysteine 111. Residues isoleucine 180, aspartate 200, arginine 205, 267 to 269 (LSL), and 292 to 293 (IT) contribute to the NAD(+) site.

This sequence belongs to the zinc-containing alcohol dehydrogenase family. Homotetramer. The cofactor is Zn(2+).

The protein localises to the cytoplasm. It catalyses the reaction L-threonine + NAD(+) = (2S)-2-amino-3-oxobutanoate + NADH + H(+). Its pathway is amino-acid degradation; L-threonine degradation via oxydo-reductase pathway; glycine from L-threonine: step 1/2. In terms of biological role, catalyzes the NAD(+)-dependent oxidation of L-threonine to 2-amino-3-ketobutyrate. The chain is L-threonine 3-dehydrogenase from Bacillus velezensis (strain DSM 23117 / BGSC 10A6 / LMG 26770 / FZB42) (Bacillus amyloliquefaciens subsp. plantarum).